Consider the following 169-residue polypeptide: 3-hydroxyanthranilate 3,4-dioxygenase (169 aa).

Arg-44 is an O2 binding site. Residues His-48, Glu-54, and His-92 each coordinate Fe cation. Glu-54 lines the substrate pocket. Substrate-binding residues include Arg-96 and Glu-106. Positions 121, 124, 158, and 160 each coordinate a divalent metal cation.

It belongs to the 3-HAO family. Fe(2+) is required as a cofactor.

The protein localises to the cytoplasm. It catalyses the reaction 3-hydroxyanthranilate + O2 = (2Z,4Z)-2-amino-3-carboxymuconate 6-semialdehyde. It functions in the pathway cofactor biosynthesis; NAD(+) biosynthesis; quinolinate from L-kynurenine: step 3/3. Its function is as follows. Catalyzes the oxidative ring opening of 3-hydroxyanthranilate to 2-amino-3-carboxymuconate semialdehyde, which spontaneously cyclizes to quinolinate. The polypeptide is 3-hydroxyanthranilate 3,4-dioxygenase (Meyerozyma guilliermondii (strain ATCC 6260 / CBS 566 / DSM 6381 / JCM 1539 / NBRC 10279 / NRRL Y-324) (Yeast)).